A 205-amino-acid chain; its full sequence is Delta-aminolevulinic acid dehydratase (205 aa).

Residues cysteine 117, cysteine 119, and cysteine 127 each contribute to the Zn(2+) site. The active-site Schiff-base intermediate with substrate is the lysine 192. Arginine 202 contacts substrate.

It belongs to the ALAD family. As to quaternary structure, homooctamer. The cofactor is Zn(2+).

It catalyses the reaction 2 5-aminolevulinate = porphobilinogen + 2 H2O + H(+). Its pathway is porphyrin-containing compound metabolism; protoporphyrin-IX biosynthesis; coproporphyrinogen-III from 5-aminolevulinate: step 1/4. Its function is as follows. Catalyzes an early step in the biosynthesis of tetrapyrroles. Binds two molecules of 5-aminolevulinate per subunit, each at a distinct site, and catalyzes their condensation to form porphobilinogen. In Ruminiclostridium josui (Clostridium josui), this protein is Delta-aminolevulinic acid dehydratase (hemB).